Reading from the N-terminus, the 560-residue chain is Zinc finger protein 619 (560 aa).

10 C2H2-type zinc fingers span residues Tyr188–His210, Tyr216–His238, Tyr244–His266, Tyr272–His294, Phe300–His322, Tyr328–His350, Tyr356–His378, Tyr384–His406, Tyr412–His434, and Tyr440–His462.

This sequence belongs to the krueppel C2H2-type zinc-finger protein family.

The protein resides in the nucleus. In terms of biological role, may be involved in transcriptional regulation. In Homo sapiens (Human), this protein is Zinc finger protein 619 (ZNF619).